A 299-amino-acid polypeptide reads, in one-letter code: Regucalcin (299 aa).

Glu18 is an a divalent metal cation binding site. The substrate site is built by Arg101, Asn103, and Glu121. Lys144 carries the post-translational modification N6-succinyllysine. The a divalent metal cation site is built by Asn154 and Asp204. Asp204 serves as the catalytic Proton donor/acceptor. N6-succinyllysine is present on residues Lys244 and Lys253. Phosphoserine is present on Ser268.

It belongs to the SMP-30/CGR1 family. Monomer. Zn(2+) serves as cofactor. Mn(2+) is required as a cofactor. Requires Ca(2+) as cofactor. It depends on Mg(2+) as a cofactor. The cofactor is Co(2+). The N-terminus is blocked. In terms of tissue distribution, detected in liver (at protein level). Hepatocytes and renal proximal tubular epithelium.

It localises to the cytoplasm. It carries out the reaction D-glucono-1,5-lactone + H2O = D-gluconate + H(+). Its pathway is cofactor biosynthesis; L-ascorbate biosynthesis via UDP-alpha-D-glucuronate pathway; L-ascorbate from UDP-alpha-D-glucuronate: step 3/4. In terms of biological role, gluconolactonase with low activity towards other sugar lactones, including gulonolactone and galactonolactone. Catalyzes a key step in ascorbic acid (vitamin C) biosynthesis. Can also hydrolyze diisopropyl phosphorofluoridate and phenylacetate (in vitro). Calcium-binding protein. Modulates Ca(2+) signaling, and Ca(2+)-dependent cellular processes and enzyme activities. The chain is Regucalcin (Rgn) from Rattus norvegicus (Rat).